Here is a 210-residue protein sequence, read N- to C-terminus: ATP-dependent Clp protease proteolytic subunit (210 aa).

The active-site Nucleophile is Ser-106. His-131 is a catalytic residue.

This sequence belongs to the peptidase S14 family. As to quaternary structure, fourteen ClpP subunits assemble into 2 heptameric rings which stack back to back to give a disk-like structure with a central cavity, resembling the structure of eukaryotic proteasomes.

It localises to the cytoplasm. It catalyses the reaction Hydrolysis of proteins to small peptides in the presence of ATP and magnesium. alpha-casein is the usual test substrate. In the absence of ATP, only oligopeptides shorter than five residues are hydrolyzed (such as succinyl-Leu-Tyr-|-NHMec, and Leu-Tyr-Leu-|-Tyr-Trp, in which cleavage of the -Tyr-|-Leu- and -Tyr-|-Trp bonds also occurs).. Functionally, cleaves peptides in various proteins in a process that requires ATP hydrolysis. Has a chymotrypsin-like activity. Plays a major role in the degradation of misfolded proteins. In Azospirillum brasilense, this protein is ATP-dependent Clp protease proteolytic subunit.